We begin with the raw amino-acid sequence, 217 residues long: GTP cyclohydrolase 1 (217 aa).

The Zn(2+) site is built by Cys109, His112, and Cys180.

It belongs to the GTP cyclohydrolase I family. Toroid-shaped homodecamer, composed of two pentamers of five dimers.

It carries out the reaction GTP + H2O = 7,8-dihydroneopterin 3'-triphosphate + formate + H(+). It participates in cofactor biosynthesis; 7,8-dihydroneopterin triphosphate biosynthesis; 7,8-dihydroneopterin triphosphate from GTP: step 1/1. The sequence is that of GTP cyclohydrolase 1 from Vibrio vulnificus (strain CMCP6).